We begin with the raw amino-acid sequence, 113 residues long: Neocarzinostatin (113 aa).

Cystine bridges form between Cys37–Cys47 and Cys88–Cys93.

Belongs to the neocarzinostatin family.

NCS has antibiotic activity (for Gram-positive bacteria) and antitumor activity (for certain mouse tumors). NCS binds non-covalently to a chromophore which is the cytotoxic and mutagenic component of the antibiotic. The chromophore binds to DNA as a weak intercalator and causes single- and double-strand breaks. The sequence is that of Neocarzinostatin (ncsA) from Streptomyces malayensis.